Here is a 400-residue protein sequence, read N- to C-terminus: MSSILSIKDIDLAKKKVFIRCDFNVPQDEFLNITDDRRIRSAIPTIRYCLDNGCAVILASHLGRPKEIASKYSLEPVAKRLARLMAKDVIMAKDVIGEDAKKKASELKSSEILLLENLRFEKGETKNDENLAKELASMADVYINDAFGVCHRAHASVEAITKYFDNTHKGAGFLLQKEIEFASNLIKHPARPFVAVVGGSKVSGKLQALTNLLPKVDKLIIGGGMAFTFLKAQGYDIGNSLLEEDLIEEANKILLKGKNLGVKIYLPVDVTAAQTCSQEAVMKYTPVQEIPAGWMGLDIGPASVRLFKEALSDAQTIWWNGPMGVFEIDKFSKGSIKMSHYISESHATTVIGGGDTADVVARAGDADEMTFISTGGGASLELIEGKELPGVKPLTIKDSE.

Substrate-binding positions include 22-24, arginine 38, 61-64, arginine 119, and arginine 152; these read DFN and HLGR. Residues lysine 205, glycine 296, glutamate 327, and 353 to 356 each bind ATP; that span reads GGDT.

This sequence belongs to the phosphoglycerate kinase family. As to quaternary structure, monomer.

It localises to the cytoplasm. It carries out the reaction (2R)-3-phosphoglycerate + ATP = (2R)-3-phospho-glyceroyl phosphate + ADP. The protein operates within carbohydrate degradation; glycolysis; pyruvate from D-glyceraldehyde 3-phosphate: step 2/5. This Campylobacter lari (strain RM2100 / D67 / ATCC BAA-1060) protein is Phosphoglycerate kinase.